An 815-amino-acid chain; its full sequence is Tubulin polyglutamylase TTLL13 (815 aa).

One can recognise a TTL domain in the interval 85–430 (RRSLAINLTN…RGCDKRKVME (346 aa)). ATP contacts are provided by residues lysine 202, 208-209 (QG), 230-233 (QQYI), and 243-245 (KFD). Position 208 (glutamine 208) interacts with a protein. Arginine 269 provides a ligand contact to L-glutamate. Position 291–292 (291–292 (TN)) interacts with ATP. Residues tyrosine 293 and lysine 311 each coordinate L-glutamate. Mg(2+) is bound by residues aspartate 376, glutamate 389, and asparagine 391. Residues 401-482 (CLDQEVKDAL…LGKYRRIYPG (82 aa)) form a c-MTBD region region. L-glutamate is bound at residue lysine 407. A coiled-coil region spans residues 504–528 (ASKAREECARQQLEEIRLKQEQQET). The segment at 520 to 556 (RLKQEQQETSGTKRQKARDQNQGESAGEKSRPRAGLQ) is disordered. Over residues 536–550 (ARDQNQGESAGEKSR) the composition is skewed to basic and acidic residues.

This sequence belongs to the tubulin--tyrosine ligase family. It depends on Mg(2+) as a cofactor.

It catalyses the reaction (L-glutamyl)(n)-gamma-L-glutamyl-L-glutamyl-[protein] + L-glutamate + ATP = (L-glutamyl)(n+1)-gamma-L-glutamyl-L-glutamyl-[protein] + ADP + phosphate + H(+). Functionally, polyglutamylase which modifies tubulin, generating polyglutamate side chains of variable lengths on the gamma-carboxyl group of specific glutamate residues within the C-terminal tail of tubulin. Mediates ATP-dependent polyglutamate side-chain elongation of the polyglutamylation reaction but not the initiation step. Preferentially modifies the alpha-tubulin tail over a beta-tail. In Homo sapiens (Human), this protein is Tubulin polyglutamylase TTLL13.